Here is a 359-residue protein sequence, read N- to C-terminus: Protein mab-21-like 2 (359 aa).

It belongs to the mab-21 family.

The protein localises to the nucleus. It localises to the cytoplasm. Its function is as follows. Required for eye morphogenesis. May promote the survival of proliferating retinal progenitor cells. The sequence is that of Protein mab-21-like 2 (mab21l2) from Danio rerio (Zebrafish).